The sequence spans 423 residues: Putative transmembrane protein ORF103 (423 aa).

A compositionally biased stretch (basic and acidic residues) spans 43 to 57; sequence EPKIEQEEPQQKPEV. Residues 43–91 form a disordered region; that stretch reads EPKIEQEEPQQKPEVVDVYSNETDKNEEEVSIITSEDEEEDEKGMLFKR. Acidic residues predominate over residues 67–84; sequence KNEEEVSIITSEDEEEDE. Helical transmembrane passes span 125 to 145 and 162 to 182; these read IIGISVRFGFWFALLIPVAVL and FSLCVILFLLLQAGIDLGLAI. Residues 253–282 are disordered; that stretch reads DESGSEVSSEDEESDQETLLRNRKMPTNSK. Transmembrane regions (helical) follow at residues 326 to 346 and 366 to 386; these read LISAMTVIPLLTILFFIIVGS and IPTLCIATYSLNWFVLIMCVL.

It is found in the host membrane. This chain is Putative transmembrane protein ORF103, found in Magallana gigas (Pacific oyster).